The chain runs to 429 residues: Adenylosuccinate synthetase (429 aa).

GTP contacts are provided by residues 12–18 (GDEGKGK) and 40–42 (GHT). The active-site Proton acceptor is Asp-13. Mg(2+) is bound by residues Asp-13 and Gly-40. IMP is bound by residues 13–16 (DEGK), 38–41 (NAGH), Thr-129, Arg-143, Gln-223, Thr-238, and Arg-302. His-41 (proton donor) is an active-site residue. 298-304 (TVTGRAR) contributes to the substrate binding site. Residues Arg-304, 330 to 332 (KLD), and 412 to 414 (STS) each bind GTP.

This sequence belongs to the adenylosuccinate synthetase family. In terms of assembly, homodimer. Requires Mg(2+) as cofactor.

The protein resides in the cytoplasm. The enzyme catalyses IMP + L-aspartate + GTP = N(6)-(1,2-dicarboxyethyl)-AMP + GDP + phosphate + 2 H(+). It functions in the pathway purine metabolism; AMP biosynthesis via de novo pathway; AMP from IMP: step 1/2. Plays an important role in the de novo pathway of purine nucleotide biosynthesis. Catalyzes the first committed step in the biosynthesis of AMP from IMP. The polypeptide is Adenylosuccinate synthetase (Acidiphilium cryptum (strain JF-5)).